We begin with the raw amino-acid sequence, 311 residues long: Splicing factor spf30 (311 aa).

A Tudor domain is found at 76–139 (DFTPGNLVMA…KAMPEEKRQE (64 aa)). Disordered regions lie at residues 154–183 (RSTP…RASS) and 276–311 (STED…DEDS). Over residues 168–183 (ASMSTSPSNYASRASS) the composition is skewed to polar residues. Phosphoserine is present on S173. Over residues 301–311 (HIYNYREDEDS) the composition is skewed to basic and acidic residues.

This sequence belongs to the SMN family. In terms of assembly, associates with spliceosomes.

The protein localises to the nucleus. Involved in spliceosome assembly. The chain is Splicing factor spf30 (spf30) from Schizosaccharomyces pombe (strain 972 / ATCC 24843) (Fission yeast).